We begin with the raw amino-acid sequence, 320 residues long: GTP 3',8-cyclase (320 aa).

The Radical SAM core domain occupies 4–227; it reads LYSRRINYMR…METEKSSPAK (224 aa). A GTP-binding site is contributed by Arg13. [4Fe-4S] cluster-binding residues include Cys20 and Cys24. Tyr26 is a binding site for S-adenosyl-L-methionine. Cys27 is a [4Fe-4S] cluster binding site. Position 63 (Arg63) interacts with GTP. Gly67 contacts S-adenosyl-L-methionine. Position 94 (Thr94) interacts with GTP. Position 118 (Ser118) interacts with S-adenosyl-L-methionine. Residue Lys155 participates in GTP binding. Met189 provides a ligand contact to S-adenosyl-L-methionine. Residues Cys249 and Cys252 each coordinate [4Fe-4S] cluster. 254–256 contributes to the GTP binding site; the sequence is RVR. Cys266 serves as a coordination point for [4Fe-4S] cluster. Over residues 300-312 the composition is skewed to basic and acidic residues; that stretch reads KHDLLTDSHEESN. The interval 300 to 320 is disordered; that stretch reads KHDLLTDSHEESNRGMSQIGG.

Belongs to the radical SAM superfamily. MoaA family. In terms of assembly, monomer and homodimer. The cofactor is [4Fe-4S] cluster.

It catalyses the reaction GTP + AH2 + S-adenosyl-L-methionine = (8S)-3',8-cyclo-7,8-dihydroguanosine 5'-triphosphate + 5'-deoxyadenosine + L-methionine + A + H(+). It participates in cofactor biosynthesis; molybdopterin biosynthesis. Functionally, catalyzes the cyclization of GTP to (8S)-3',8-cyclo-7,8-dihydroguanosine 5'-triphosphate. This chain is GTP 3',8-cyclase, found in Alkaliphilus oremlandii (strain OhILAs) (Clostridium oremlandii (strain OhILAs)).